The primary structure comprises 212 residues: 3-demethoxyubiquinol 3-hydroxylase (212 aa).

Fe cation contacts are provided by E61, E91, H94, E143, E175, and H178.

The protein belongs to the COQ7 family. The cofactor is Fe cation.

Its subcellular location is the cell membrane. It carries out the reaction a 5-methoxy-2-methyl-3-(all-trans-polyprenyl)benzene-1,4-diol + AH2 + O2 = a 3-demethylubiquinol + A + H2O. It functions in the pathway cofactor biosynthesis; ubiquinone biosynthesis. Functionally, catalyzes the hydroxylation of 2-nonaprenyl-3-methyl-6-methoxy-1,4-benzoquinol during ubiquinone biosynthesis. This chain is 3-demethoxyubiquinol 3-hydroxylase, found in Methylibium petroleiphilum (strain ATCC BAA-1232 / LMG 22953 / PM1).